Consider the following 239-residue polypeptide: Ribonuclease PH (239 aa).

Phosphate-binding positions include arginine 87 and 125 to 127 (GTR).

The protein belongs to the RNase PH family. In terms of assembly, homohexameric ring arranged as a trimer of dimers.

The enzyme catalyses tRNA(n+1) + phosphate = tRNA(n) + a ribonucleoside 5'-diphosphate. Phosphorolytic 3'-5' exoribonuclease that plays an important role in tRNA 3'-end maturation. Removes nucleotide residues following the 3'-CCA terminus of tRNAs; can also add nucleotides to the ends of RNA molecules by using nucleoside diphosphates as substrates, but this may not be physiologically important. Probably plays a role in initiation of 16S rRNA degradation (leading to ribosome degradation) during starvation. This is Ribonuclease PH from Pseudomonas paraeruginosa (strain DSM 24068 / PA7) (Pseudomonas aeruginosa (strain PA7)).